Reading from the N-terminus, the 179-residue chain is ATLSAGQPASLTEAEPNTEKATLHRHPAPKRRGKCSDFSPSFATLICLGLRTDLAFGPVRRNSRRSEPLSGSQPRPPIVTGETFELQVHQRFPLRHPAPAPVYTLRRPVQRACGGPIGPRELSKWMTGTAECPTVKSPHPPEQTANRRTPSRVRRSRRPSPSGSLLLATSRISKKSTCR.

Residues 1-10 (ATLSAGQPAS) show a composition bias toward polar residues. Disordered regions lie at residues 1–35 (ATLS…RGKC), 59–80 (VRRN…PIVT), and 131–179 (ECPT…STCR). Basic residues predominate over residues 23–33 (LHRHPAPKRRG). Positions 149-158 (TPSRVRRSRR) are enriched in basic residues.

This is an uncharacterized protein from Human cytomegalovirus (strain AD169) (HHV-5).